The primary structure comprises 458 residues: UDP-N-acetylmuramoylalanine--D-glutamate ligase (458 aa).

Residue 118-124 coordinates ATP; the sequence is GTNGKTT.

Belongs to the MurCDEF family.

Its subcellular location is the cytoplasm. It carries out the reaction UDP-N-acetyl-alpha-D-muramoyl-L-alanine + D-glutamate + ATP = UDP-N-acetyl-alpha-D-muramoyl-L-alanyl-D-glutamate + ADP + phosphate + H(+). The protein operates within cell wall biogenesis; peptidoglycan biosynthesis. Functionally, cell wall formation. Catalyzes the addition of glutamate to the nucleotide precursor UDP-N-acetylmuramoyl-L-alanine (UMA). In Ligilactobacillus salivarius (strain UCC118) (Lactobacillus salivarius), this protein is UDP-N-acetylmuramoylalanine--D-glutamate ligase.